The sequence spans 229 residues: 2-C-methyl-D-erythritol 4-phosphate cytidylyltransferase (229 aa).

It belongs to the IspD/TarI cytidylyltransferase family. IspD subfamily.

The enzyme catalyses 2-C-methyl-D-erythritol 4-phosphate + CTP + H(+) = 4-CDP-2-C-methyl-D-erythritol + diphosphate. It functions in the pathway isoprenoid biosynthesis; isopentenyl diphosphate biosynthesis via DXP pathway; isopentenyl diphosphate from 1-deoxy-D-xylulose 5-phosphate: step 2/6. Functionally, catalyzes the formation of 4-diphosphocytidyl-2-C-methyl-D-erythritol from CTP and 2-C-methyl-D-erythritol 4-phosphate (MEP). The sequence is that of 2-C-methyl-D-erythritol 4-phosphate cytidylyltransferase from Neisseria meningitidis serogroup C / serotype 2a (strain ATCC 700532 / DSM 15464 / FAM18).